A 205-amino-acid polypeptide reads, in one-letter code: Ras-like protein 3 (205 aa).

Position 16 to 23 (16 to 23 (GGGGVGKS)) interacts with GTP. The Effector region signature appears at 38-46 (YDPTIEDSY). GTP is bound by residues 63–67 (DTAGQ) and 122–125 (NKCD). C202 bears the Cysteine methyl ester mark. C202 carries S-farnesyl cysteine lipidation. Residues 203–205 (ILM) constitute a propeptide, removed in mature form.

Belongs to the small GTPase superfamily. Ras family.

Its subcellular location is the cell membrane. It carries out the reaction GTP + H2O = GDP + phosphate + H(+). Its activity is regulated as follows. Alternates between an inactive form bound to GDP and an active form bound to GTP. Activated by a guanine nucleotide-exchange factor (GEF) and inactivated by a GTPase-activating protein (GAP). The polypeptide is Ras-like protein 3 (RAS3) (Mucor circinelloides f. lusitanicus (Mucor racemosus var. lusitanicus)).